Consider the following 433-residue polypeptide: MTDFFAGIPQIRYEGEGSSNEFAFRHYNPDEVILGKRMEEHLRFAVAWWHSFAWPGGDPFGGQTFNRPWFGDTLDLAKLKADVAFEMFDILGAPFFCFHDADIRPEGATFAESKRNLEEIVDHIGTRMEGSKTKLLWGTANLFSHRRFMSGAATNPDPDVFAWSAATVKGCMDATMKLGGANYVLWGGREGYETLLNTDLTREAENAGRFLQMVVDYKHKIGFQGTILIEPKPQEPSKHQYDYDVATVYGFLKRFGLEKEVKLNIEQGHAILAGHSFEHELALAASLGILGSIDMNRNDYQSGWDTDQFPHNHPEMALAYYEILRAGGFTTGGTNFDAKIRRQSLDPEDLVLAHVGGMDTCARALKAAARLYEDGSLEAARAARYAGWETPEAQAMLASSLEEIEARVLAEGINPEPRSGRQERLENLWNRFV.

Residues H99 and D102 contribute to the active site. Residues E230, E266, H269, D294, D305, D307, and D337 each contribute to the Mg(2+) site.

The protein belongs to the xylose isomerase family. Homotetramer. Mg(2+) serves as cofactor.

It is found in the cytoplasm. The catalysed reaction is alpha-D-xylose = alpha-D-xylulofuranose. The chain is Xylose isomerase from Cereibacter sphaeroides (strain ATCC 17029 / ATH 2.4.9) (Rhodobacter sphaeroides).